The sequence spans 833 residues: Leucine--tRNA ligase (833 aa).

The 'HIGH' region motif lies at P41 to H52. A 'KMSKS' region motif is present at residues K610 to S614. K613 contacts ATP.

This sequence belongs to the class-I aminoacyl-tRNA synthetase family.

The protein resides in the cytoplasm. It catalyses the reaction tRNA(Leu) + L-leucine + ATP = L-leucyl-tRNA(Leu) + AMP + diphosphate. The sequence is that of Leucine--tRNA ligase from Streptococcus pneumoniae serotype 2 (strain D39 / NCTC 7466).